A 162-amino-acid polypeptide reads, in one-letter code: Transcription elongation factor GreA (162 aa).

Residues 9–38 (QGYKALEEELARLKSERPEIIQAIKEAREE) are a coiled coil.

It belongs to the GreA/GreB family.

In terms of biological role, necessary for efficient RNA polymerase transcription elongation past template-encoded arresting sites. The arresting sites in DNA have the property of trapping a certain fraction of elongating RNA polymerases that pass through, resulting in locked ternary complexes. Cleavage of the nascent transcript by cleavage factors such as GreA or GreB allows the resumption of elongation from the new 3'terminus. GreA releases sequences of 2 to 3 nucleotides. The sequence is that of Transcription elongation factor GreA from Desulfovibrio desulfuricans (strain ATCC 27774 / DSM 6949 / MB).